The chain runs to 81 residues: Putative defensin-like protein 148 (81 aa).

A signal peptide spans 1–24; the sequence is MIKSFQLSFTVLIVFTVLILGVVG. 4 disulfide bridges follow: C34–C80, C43–C63, C48–C74, and C52–C76.

It belongs to the DEFL family.

It is found in the secreted. This chain is Putative defensin-like protein 148 (LCR4), found in Arabidopsis thaliana (Mouse-ear cress).